Here is a 363-residue protein sequence, read N- to C-terminus: 3-isopropylmalate dehydrogenase (363 aa).

79 to 92 is a binding site for NAD(+); that stretch reads GPKWEHLPPNEQPE. Residues Arg100, Arg110, Arg139, and Asp228 each contribute to the substrate site. Mg(2+) contacts are provided by Asp228, Asp252, and Asp256. 286–298 provides a ligand contact to NAD(+); that stretch reads GSAPDIAGKNIAN.

Belongs to the isocitrate and isopropylmalate dehydrogenases family. LeuB type 1 subfamily. In terms of assembly, homodimer. Mg(2+) is required as a cofactor. Mn(2+) serves as cofactor.

It localises to the cytoplasm. It catalyses the reaction (2R,3S)-3-isopropylmalate + NAD(+) = 4-methyl-2-oxopentanoate + CO2 + NADH. It functions in the pathway amino-acid biosynthesis; L-leucine biosynthesis; L-leucine from 3-methyl-2-oxobutanoate: step 3/4. Functionally, catalyzes the oxidation of 3-carboxy-2-hydroxy-4-methylpentanoate (3-isopropylmalate) to 3-carboxy-4-methyl-2-oxopentanoate. The product decarboxylates to 4-methyl-2 oxopentanoate. This Vibrio cholerae serotype O1 (strain ATCC 39315 / El Tor Inaba N16961) protein is 3-isopropylmalate dehydrogenase.